The chain runs to 72 residues: SRY-related protein AES6 (72 aa).

The segment at residues 1–69 (VKRPMNAFMV…KHMADYPDYK (69 aa)) is a DNA-binding region (HMG box).

The protein resides in the nucleus. This is SRY-related protein AES6 from Alligator mississippiensis (American alligator).